Reading from the N-terminus, the 335-residue chain is Corrinoid adenosyltransferase PduO (335 aa).

Histidine 206 serves as a coordination point for heme.

It belongs to the Cob(I)alamin adenosyltransferase family. PduO subfamily. As to quaternary structure, forms a complex with PduS. The cofactor is heme b. Requires Mg(2+) as cofactor.

Its subcellular location is the bacterial microcompartment. The catalysed reaction is cob(I)alamin-[corrinoid adenosyltransferase] + ATP = apo-[corrinoid adenosyltransferase] + adenosylcob(III)alamin + triphosphate. The protein operates within polyol metabolism; 1,2-propanediol degradation. It functions in the pathway cofactor biosynthesis; adenosylcobalamin biosynthesis. Functionally, converts cob(I)alamin to adenosylcobalamin (adenosylcob(III)alamin), the cofactor for propanediol dehydratase. Found in the bacterial microcompartment (BMC) dedicated to 1,2-propanediol (1,2-PD) degradation. PduS and PduO allow regeneration of the adenosylcobalamin cofactor within the BMC. In terms of biological role, expression of a cosmid containing the full 21-gene pdu operon in E.coli allows E.coli to grow on 1,2-propanediol (1,2-PD) with the appearance of bacterial microcompartments (BMC) in its cytoplasm. The 1,2-PD-specific bacterial microcompartment (BMC) concentrates low levels of 1,2-PD catabolic enzymes, concentrates volatile reaction intermediates thus enhancing pathway flux and keeps the level of toxic, mutagenic propionaldehyde low. This Citrobacter freundii protein is Corrinoid adenosyltransferase PduO.